We begin with the raw amino-acid sequence, 861 residues long: ToMV resistant protein Tm-2 netted virescent (861 aa).

Residues 63 to 83 (VKNLLKDIQELAGDVEDLLDD) adopt a coiled-coil conformation. Residues 162–388 (DDFNMLQAKL…LESMGHKVQD (227 aa)) enclose the NB-ARC domain. 185–192 (GMPGLGKT) is a binding site for ATP. LRR repeat units lie at residues 225–248 (LDIA…NLRS), 305–327 (LHAL…IFNF), 388–411 (DGCA…CFLY), 449–472 (LAED…TYNG), 510–536 (VARL…KLEK), 585–608 (MTCL…IVKL), 609–631 (TRLE…VWES), 652–680 (ISSF…FFEP), 689–710 (LRKL…IFSP), 712–735 (LKAL…LSSY), 736–758 (PHIA…SFPP), 784–807 (LRKL…EANG), and 810–835 (FPQL…DVSM).

The protein belongs to the disease resistance NB-LRR family. (Microbial infection) Interacts with tobamoviruses mouvement protein at the plasma membrane; this interaction triggers defense responses leading to programmed cell death. In terms of assembly, binds to HSP90 proteins; this interaction seems required for defense responses toward tobamoviruses.

It is found in the cell membrane. In terms of biological role, inhibitor of viral mouvements which confers resistance to some tobamoviruses including tomato mosaic virus (ToMV) (e.g. isolate L and W3) and tobacco mosaic virus (TMV), but not to resistance-breaking isolates (e.g. Ltbl) ToMV and tomato brown rugose fruit virus (ToBRFV). Elicits a hypersensitive reaction in response to avirulent (Avr) movement proteins from resistance inducing tobamoviruses (e.g. ToMV and TMV) strains, thus leading to programmed cell death. The chain is ToMV resistant protein Tm-2 netted virescent from Solanum lycopersicum (Tomato).